The sequence spans 238 residues: Thrombin-like enzyme collinein-1 (238 aa).

The region spanning 1-229 (VIGGDECNIN…HLDWIQNIIA (229 aa)) is the Peptidase S1 domain. 6 disulfide bridges follow: cysteine 7/cysteine 141, cysteine 28/cysteine 44, cysteine 78/cysteine 236, cysteine 120/cysteine 190, cysteine 152/cysteine 169, and cysteine 180/cysteine 205. Residues histidine 43 and aspartate 88 each act as charge relay system in the active site. The active-site Charge relay system is the serine 184.

The protein belongs to the peptidase S1 family. Snake venom subfamily. In terms of assembly, monomer. As to expression, expressed by the venom gland.

The protein localises to the secreted. Its activity is regulated as follows. Inhibited by Cu(2+) and, to a lesser extent, by Zn(2+) and Ba(2+). Not inhibited by Ca(2+) and Mg(2+). In terms of biological role, thrombin-like snake venom serine protease. Releases fibrinopeptide A and B in the conversion of fibrinogen to fibrin, with preferential activity on the alpha chain of fibrinogen. Also hydrolyzes N-p-toluensulfonyl arginine ester (TAME) and chromogenic artificial substrates of the blood coagulation cascade: S-2222 for factor Xa, S-2302 for kallikrein and S-2238 for thrombin. When tested in vitro, the recombinant protein does not degrade blood clots, suggesting that this toxin lacks fibrinolytic activity. In addition, it moderately inhibits human Kv10.1/KCNH1/EAG1 currents, with a mechanism independent of its enzymatic activity. It selectively blocks Kv10.1/KCNH1/EAG1 in a time and dose-dependent manner (IC(50)=4.2 uM for native protein and IC(50)=2.5 uM for recombinant protein). It may have a preference in interacting with Kv10.1/KCNH1/EAG1 in its closed state, since the inhibitory effect of the toxin is decreased at more depolarized potentials. Corroboratively, it may have possible antitumor applications, since it reduces the viability of human breast cancer cell line MCF-7, which strongly expresses Kv10.1/KCNH1/EAG1, but does not affect the liver carcinoma and the non-tumorigenic epithelial breast cell lines, which weakly express Kv10.1/KCNH1/EAG1. When tested on peripheral blood mononuclear cells (PBMC), the native protein shows mild cytotoxicity, whereas the recombinant protein does not show any cytotoxicity. Native form is not immununogenic, since it does not induce statistically significant antibody production in mice, whereas recombinant form shows an antibody titer slightly higher than the native form. In vivo, subplantar injection in mice paw induces a discreet paw edema. In addition, intraperitoneal injection of the recombinant protein into mice led to fibrinogen depletion, resulting in the blood incoagulability. In Crotalus durissus collilineatus (Brazilian rattlesnake), this protein is Thrombin-like enzyme collinein-1.